Reading from the N-terminus, the 476-residue chain is Beta-xylosidase (476 aa).

Glu188 (proton donor) is an active-site residue. The Nucleophile role is filled by Glu292. Asn468 carries N-linked (GlcNAc...) asparagine glycosylation.

It belongs to the glycosyl hydrolase 5 (cellulase A) family.

The protein localises to the secreted. It carries out the reaction Hydrolysis of (1-&gt;4)-beta-D-xylans, to remove successive D-xylose residues from the non-reducing termini.. Its function is as follows. Catalyzes the hydrolysis of xylo-oligomers to xylose units and plays an important role in xylan degradation. Can also perform the transglycosylation of xylose and alcohol. Has no endoglucanase activity. The chain is Beta-xylosidase from Phanerodontia chrysosporium (White-rot fungus).